Here is a 216-residue protein sequence, read N- to C-terminus: MAGRGGAARPNGPAAGNKICQFKLVLLGESAVGKSSLVLRFVKGQFHEYQESTIGAAFLTQTVCLDDTTVKFEIWDTAGQERYHSLAPMYYRGAQAAIVVYDITNTDTFVRAKNWVKELQRQASPNIVIALAGNKADLATKRAVDFQDAQTYADDNSLLFMETSAKTAMNVNEIFMAIAKKLPKNEPQNAPGGPGRNRVVDLQESSQPSRSQCCSN.

GTP is bound by residues Ser30, Ala31, Gly33, Lys34, Ser35, Ser36, His47, Glu48, Thr53, Gly79, Asn134, Lys135, Asp137, Ala165, and Lys166. Ser35 serves as a coordination point for Mg(2+). 2 short sequence motifs (switch) span residues 45 to 57 (QFHE…IGAA) and 78 to 94 (AGQE…YRGA). Residue Thr53 participates in Mg(2+) binding. The disordered stretch occupies residues 184-216 (KNEPQNAPGGPGRNRVVDLQESSQPSRSQCCSN). The span at 203-216 (QESSQPSRSQCCSN) shows a compositional bias: polar residues. S-geranylgeranyl cysteine attachment occurs at residues Cys213 and Cys214.

Belongs to the small GTPase superfamily. Rab family. It depends on Mg(2+) as a cofactor. Detected in brain, ovary, rectum, small intestine, large intestine, liver, spleen, follicle and kidney (at protein level).

The protein resides in the cell membrane. It is found in the early endosome membrane. It catalyses the reaction GTP + H2O = GDP + phosphate + H(+). Its activity is regulated as follows. Regulated by guanine nucleotide exchange factors (GEFs) which promote the exchange of bound GDP for free GTP. Regulated by GTPase activating proteins (GAPs) which increase the GTP hydrolysis activity. Inhibited by GDP dissociation inhibitors (GDIs). Its function is as follows. The small GTPases Rab are key regulators of intracellular membrane trafficking, from the formation of transport vesicles to their fusion with membranes. Rabs cycle between an inactive GDP-bound form and an active GTP-bound form that is able to recruit to membranes different sets of downstream effectors directly responsible for vesicle formation, movement, tethering and fusion. The chain is Ras-related protein Rab-5C (RAB5C) from Gallus gallus (Chicken).